The primary structure comprises 191 residues: Protein phosphatase inhibitor 2 (191 aa).

The span at 20 to 31 (ESNKPVRQKITE) shows a compositional bias: basic and acidic residues. 2 disordered regions span residues 20-52 (ESNK…RGRA) and 67-191 (RNVL…PELI). 2 positions are modified to phosphoserine: Ser-45 and Ser-47. The segment covering 93–109 (SDEEEEEADPMDQDEEG) has biased composition (acidic residues). Residues 114-136 (KNERFNAHRKAHYDEFRKVKELR) are compositionally biased toward basic and acidic residues.

Interacts with protein phosphatase 1. Interacts with TOPP1, SRK2D/SNRK2.2, SRK2I/SNRK2.3, SRK2E/SNRK2.6, SRK2C/SNRK2.8 and PYL11. Phosphorylated in vivo. As to expression, expressed in roots, cotyledons, leaves, flowers and siliques.

It is found in the nucleus. Its subcellular location is the cytoplasm. Inhibitor of protein-phosphatase 1 (PP1). Binds to and inhibits PP1 activity. Acts as negative regulator of abscisic acid (ABA) signaling. Enhances the inhibition of SRK2E/SNRK2.6 by TOPP1. May promote the interaction between TOPP1 and the ABA receptor PYL11. This chain is Protein phosphatase inhibitor 2, found in Arabidopsis thaliana (Mouse-ear cress).